A 738-amino-acid polypeptide reads, in one-letter code: Prolyl oligopeptidase A (738 aa).

Active-site charge relay system residues include S581, D665, and H701.

The protein belongs to the peptidase S9A family. As to quaternary structure, monomer.

The enzyme catalyses Hydrolysis of Pro-|-Xaa &gt;&gt; Ala-|-Xaa in oligopeptides.. Housekeeping prolyl oligopeptidase (POP) that behaves like a conventional POP by cleaving peptide bonds on the C-terminal side of prolyl residues within peptides that are up to approximately 30 amino acids long. The sequence is that of Prolyl oligopeptidase A from Galerina marginata (strain CBS 339.88).